The chain runs to 287 residues: uncharacterized protein (287 aa).

Residues Thr43 and Tyr104 each act as charge relay system in the active site. Residue Tyr130 is the Proton donor of the active site. Catalysis depends on Lys158, which acts as the Schiff-base intermediate with substrate.

Belongs to the DapA family. As to quaternary structure, homotetramer.

It is found in the cytoplasm. This is an uncharacterized protein from Pyrococcus horikoshii (strain ATCC 700860 / DSM 12428 / JCM 9974 / NBRC 100139 / OT-3).